A 307-amino-acid chain; its full sequence is OTU domain-containing protein 2 (307 aa).

2 disordered regions span residues 23-46 and 96-130; these read ENKD…RKEV and SRDE…AKRD. The segment covering 103-114 has biased composition (low complexity); that stretch reads QNVPVQQQQQGQ. Positions 167-307 constitute an OTU domain; it reads LKQFDIQPDG…GEHYNSLHDS (141 aa).

This chain is OTU domain-containing protein 2 (OTU2), found in Saccharomyces cerevisiae (strain ATCC 204508 / S288c) (Baker's yeast).